The following is a 123-amino-acid chain: Small ribosomal subunit protein uS12 (123 aa).

Asp-89 is subject to 3-methylthioaspartic acid.

The protein belongs to the universal ribosomal protein uS12 family. Part of the 30S ribosomal subunit. Contacts proteins S8 and S17. May interact with IF1 in the 30S initiation complex.

Functionally, with S4 and S5 plays an important role in translational accuracy. In terms of biological role, interacts with and stabilizes bases of the 16S rRNA that are involved in tRNA selection in the A site and with the mRNA backbone. Located at the interface of the 30S and 50S subunits, it traverses the body of the 30S subunit contacting proteins on the other side and probably holding the rRNA structure together. The combined cluster of proteins S8, S12 and S17 appears to hold together the shoulder and platform of the 30S subunit. This chain is Small ribosomal subunit protein uS12, found in Rhodopseudomonas palustris (strain BisA53).